Here is a 657-residue protein sequence, read N- to C-terminus: uncharacterized protein (657 aa).

Residues 1–26 (MFGKGLVKKSLLFFSGVSTMAVFLVS) form the signal peptide. The N-palmitoyl cysteine moiety is linked to residue Cys-27. A lipid anchor (S-diacylglycerol cysteine) is attached at Cys-27. 3 disordered regions span residues 291-316 (ISPK…FSST), 468-496 (RLSS…DGII), and 516-563 (KSMT…KETN). Over residues 294–304 (KQGSDNNSNLS) the composition is skewed to polar residues. The span at 469 to 495 (LSSDDTNTKKALKEVSTHKNGSDKDGI) shows a compositional bias: basic and acidic residues. Residues 516–525 (KSMTDNNSGT) are compositionally biased toward polar residues. Over residues 526–545 (EQKKNLSEVDTKKKEKESKG) the composition is skewed to basic and acidic residues. Residues 546-559 (KTQSNGQDSGQQNG) are compositionally biased toward low complexity.

The protein to T.pallidum TmpC.

The protein localises to the cell membrane. This is an uncharacterized protein from Mycoplasma pneumoniae (strain ATCC 29342 / M129 / Subtype 1) (Mycoplasmoides pneumoniae).